The chain runs to 538 residues: MAKQIKFSEEARRAMLRGVDKLADAVKVTLGPKGRNVVLEKKFGSPLITNDGVTIAKEIELEDPFENMGAKLVAEVASKTNDIAGDGTTTATVLAQAMIREGLKNVAAGANPMGIRRGIEKAVAVAVEELKAISKPIKGKESIAQVAAISAADEEVGQLIAEAMERVGNDGVITLEESKGFTTELDVVEGMQFDRGYVSPNMITDTEKMEAVLENPYILITDKKVSSIQELLPALEQVVQQGRPLLIIAEDVEGEALATLVVNKLRGTFNAVRVKAPGFGDRRKAMLEDIAILTGGEVISEELGRELKSTTIASLGRASKVVVTKETTTIVEGAGDSKRIKAAINQIRAQLKETTSEFDREKLQERLAKLAGGVAVIKVGAATETELKERKLRIEDALNSTRAAVEEGIGAGGGTALMNIHNKVAAIEAEGDEATGVKIVLRAIEEPVRQIAQNAGLEGSIIVERLKNEKPGIGFNAATGEWVDMIEAGIVDPTKVTRSALQNAASVAAMVLTTEACVADKPEENKGNNNMPDMGGMM.

ATP is bound by residues 29–32 (TLGP), 86–90 (DGTTT), G413, 476–478 (NAA), and D492.

This sequence belongs to the chaperonin (HSP60) family. In terms of assembly, forms a cylinder of 14 subunits composed of two heptameric rings stacked back-to-back. Interacts with the co-chaperonin GroES.

The protein localises to the cytoplasm. It catalyses the reaction ATP + H2O + a folded polypeptide = ADP + phosphate + an unfolded polypeptide.. Functionally, together with its co-chaperonin GroES, plays an essential role in assisting protein folding. The GroEL-GroES system forms a nano-cage that allows encapsulation of the non-native substrate proteins and provides a physical environment optimized to promote and accelerate protein folding. The sequence is that of Chaperonin GroEL from Bacillus sp. (strain PS3).